The primary structure comprises 748 residues: ATP-dependent RNA helicase DRS1 (748 aa).

2 disordered regions span residues 1–72 (MAVK…PEFQ) and 111–211 (RKGG…EDTK). Acidic residues predominate over residues 18–32 (DSEEDVPDLDASDDE). Residues 38–52 (VKSSKTKNKSKKKAK) are compositionally biased toward basic residues. Positions 58-67 (HLDEDVHEDL) are enriched in basic and acidic residues. 3 stretches are compositionally biased toward acidic residues: residues 124–153 (DAEE…DELA), 168–185 (ENEE…DEDD), and 202–211 (EDEDIEEDTK). The short motif at 233–261 (KTFNSLSLSRPVLKGLGSLGYTSPSPIQS) is the Q motif element. Residues 264–439 (IPIALLGKDI…SLSLKKPVRI (176 aa)) form the Helicase ATP-binding domain. Residue 277 to 284 (AVTGSGKT) participates in ATP binding. The DEAD box signature appears at 387 to 390 (DEAD). The Helicase C-terminal domain occupies 468 to 628 (LLYQLIRKLD…TQVEQVNSLI (161 aa)). Positions 632-667 (GDVVEEIIEEEKQEKEILRAEMELRKGENMLKHKEE) form a coiled coil. The segment at 687–748 (KMLQVLAKNK…YGKKGKKGKK (62 aa)) is disordered. A compositionally biased stretch (basic residues) spans 694 to 705 (KNKKPINSKKRK). Residues 720 to 732 (TQKDRVEYQERQY) show a composition bias toward basic and acidic residues.

This sequence belongs to the DEAD box helicase family. DDX27/DRS1 subfamily. In terms of assembly, associates with pre-ribosomal particles.

The protein resides in the nucleus. It localises to the nucleolus. It carries out the reaction ATP + H2O = ADP + phosphate + H(+). In terms of biological role, ATP-binding RNA helicase involved in ribosome assembly. In Kluyveromyces lactis (strain ATCC 8585 / CBS 2359 / DSM 70799 / NBRC 1267 / NRRL Y-1140 / WM37) (Yeast), this protein is ATP-dependent RNA helicase DRS1 (DRS1).